We begin with the raw amino-acid sequence, 285 residues long: Chalcone synthase 6-4 (285 aa).

Residue C60 is part of the active site.

It belongs to the thiolase-like superfamily. Chalcone/stilbene synthases family.

The catalysed reaction is (E)-4-coumaroyl-CoA + 3 malonyl-CoA + 3 H(+) = 2',4,4',6'-tetrahydroxychalcone + 3 CO2 + 4 CoA. Its pathway is secondary metabolite biosynthesis; flavonoid biosynthesis. The primary product of this enzyme is 4,2',4',6'-tetrahydroxychalcone (also termed naringenin-chalcone or chalcone) which can under specific conditions spontaneously isomerize into naringenin. The sequence is that of Chalcone synthase 6-4 (CHS6-4) from Medicago sativa (Alfalfa).